Reading from the N-terminus, the 118-residue chain is Small ribosomal subunit protein uS13 (118 aa).

Residues 94 to 118 (GLPVRGQRTKTNARTRKGPRKPIKK) form a disordered region.

The protein belongs to the universal ribosomal protein uS13 family. In terms of assembly, part of the 30S ribosomal subunit. Forms a loose heterodimer with protein S19. Forms two bridges to the 50S subunit in the 70S ribosome.

Its function is as follows. Located at the top of the head of the 30S subunit, it contacts several helices of the 16S rRNA. In the 70S ribosome it contacts the 23S rRNA (bridge B1a) and protein L5 of the 50S subunit (bridge B1b), connecting the 2 subunits; these bridges are implicated in subunit movement. Contacts the tRNAs in the A and P-sites. In Pasteurella multocida (strain Pm70), this protein is Small ribosomal subunit protein uS13.